Reading from the N-terminus, the 181-residue chain is Cyclic AMP-dependent transcription factor ATF-3 (181 aa).

The disordered stretch occupies residues 76–96 (VTKSEVAPEEDERKRRRRERN). A Glycyl lysine isopeptide (Lys-Gly) (interchain with G-Cter in SUMO2) cross-link involves residue Lys78. Positions 86–149 (DERKRRRRER…QHLIYMLNLH (64 aa)) constitute a bZIP domain. The tract at residues 88-110 (RKRRRRERNKIAAAKCRNKKKEK) is basic motif. The tract at residues 114–142 (LQKESEKLESVNAELKAQIEELKNEKQHL) is leucine-zipper. A Phosphothreonine modification is found at Thr162. Lys175 participates in a covalent cross-link: Glycyl lysine isopeptide (Lys-Gly) (interchain with G-Cter in SUMO2).

The protein belongs to the bZIP family. ATF subfamily. ATF3 alone can bind DNA, but it preferentially forms heteromeric complexes with JUN and JUNB and does not interact with FOS. As to expression, expressed in tissues containing skeletal muscle or smooth muscle. Expressed in cutaneous and muscular sensory neurons.

It localises to the nucleus. In terms of biological role, this protein binds the cAMP response element (CRE) (consensus: 5'-GTGACGT[AC][AG]-3'), a sequence present in many viral and cellular promoters. Represses transcription from promoters with ATF sites. It may repress transcription by stabilizing the binding of inhibitory cofactors at the promoter. The chain is Cyclic AMP-dependent transcription factor ATF-3 (Atf3) from Rattus norvegicus (Rat).